The chain runs to 1576 residues: Proton channel OtopLc (1576 aa).

2 disordered regions span residues 1 to 602 and 621 to 736; these read MDSS…SSPP and QIGS…SSPV. Low complexity-rich tracts occupy residues 58–67 and 76–85; these read SLAEEVLLLV and LLGQPLPTLT. Acidic residues-rich tracts occupy residues 103–116, 159–171, 186–198, and 206–216; these read DEGD…EPVP, DDGE…DAEE, SNPD…EEQE, and PKEEDEEEDDD. A compositionally biased stretch (pro residues) spans 219–228; it reads TPPPPLPPLP. Residues 229-241 are compositionally biased toward polar residues; that stretch reads SNFSYVQGHNLGQ. Residue N230 is glycosylated (N-linked (GlcNAc...) asparagine). Over residues 243 to 252 the composition is skewed to low complexity; the sequence is TPPLTKSPSN. A compositionally biased stretch (pro residues) spans 253-264; it reads SPSPPVTPPPCP. The N-linked (GlcNAc...) asparagine glycan is linked to N267. Residues 316–341 are compositionally biased toward acidic residues; the sequence is DQPEPEDQPPEPENEPEPEPEPEPEP. The segment covering 347–356 has biased composition (basic and acidic residues); it reads AREDYSRSLD. Positions 362–376 are enriched in polar residues; the sequence is TTITTPPSNGYSASS. Residues 384–393 are compositionally biased toward basic and acidic residues; that stretch reads HFAELDEDRG. The segment covering 402-419 has biased composition (acidic residues); sequence QEPEEEVEEEEEEEEEEL. The segment covering 420–433 has biased composition (basic and acidic residues); that stretch reads TKETDEISVDRESL. A compositionally biased stretch (polar residues) spans 434-457; the sequence is QDQGGDSISSPRPASILTGSISTS. Residues 465 to 507 are compositionally biased toward low complexity; the sequence is SPKPESRGPSRSGSQRSQLRSGSQQGSIAESRGGSRIGSRTGS. Composition is skewed to polar residues over residues 519–534 and 545–555; these read PQAS…SQGQ and KSGSQRMQSPQ. Residues 563–575 show a composition bias toward pro residues; the sequence is MPSPPLMRSPPPE. The segment covering 661 to 685 has biased composition (low complexity); the sequence is AAAAPAVTTTAATTAVTSQPRSHFT. A compositionally biased stretch (basic residues) spans 686 to 709; it reads SSHHHYHLPHQFQHPHHQNHHTHS. The chain crosses the membrane as a helical span at residues 741–761; that stretch reads LFMAGVAPPIAAGAGSLMAMP. The interval 771–845 is disordered; the sequence is GRVSARSGSQ…GSSSQPALSG (75 aa). Positions 776–799 are enriched in polar residues; that stretch reads RSGSQHHVTIDESSLPSHKGNIQE. The span at 826–839 shows a compositional bias: low complexity; the sequence is DSSDPPSSPGGSSS. The next 2 helical transmembrane spans lie at 891–911 and 931–951; these read ALAT…GIAF and LYLY…LIWG. Residues 962 to 973 show a composition bias toward polar residues; sequence PSKSATKASGTD. The interval 962-1001 is disordered; sequence PSKSATKASGTDSMDESDTDSNSVHHRLPPPIPVRRPSLL. Helical transmembrane passes span 1019-1039, 1051-1071, and 1084-1104; these read GAVA…GQYF, LLAL…YFIF, and IIAR…WLNV. N1121 is a glycosylation site (N-linked (GlcNAc...) asparagine). 7 consecutive transmembrane segments (helical) span residues 1179 to 1199, 1239 to 1259, 1272 to 1292, 1310 to 1330, 1340 to 1360, 1381 to 1401, and 1412 to 1432; these read FLFP…YVMW, FVGI…FVLI, VTIC…VGMI, ILLV…VIAG, LVPI…MFIL, IVTF…LEKS, and FYGL…AIFY. The N-linked (GlcNAc...) asparagine glycan is linked to N1479. Residues 1498-1549 form a disordered region; the sequence is EEVDSGESNSAEDAGAGAGSGGSRGSGGGAGAAEAGEAGEEGQQGGDSSCGL. Over residues 1503-1512 the composition is skewed to low complexity; sequence GESNSAEDAG. Positions 1513–1528 are enriched in gly residues; the sequence is AGAGSGGSRGSGGGAG.

Belongs to the otopetrin family.

It is found in the cell membrane. Functionally, proton-selective channel that specifically transports protons into cells. Proton-selective channel activity is probably required in cell types that use changes in intracellular pH for cell signaling or to regulate biochemical or developmental processes. This Drosophila melanogaster (Fruit fly) protein is Proton channel OtopLc.